The following is a 298-amino-acid chain: MLYFIGLGLSYETDITVRGLNAIKQCSRVYLEHYTSILMTASLEELEEFYGKKVTLADRELVESGAEELLRDADKEDVAFLVVGDVFGATTHTDLVLRAKQRNIPVEVIHNASVMNAVGSCGLQLYNFGQTISMVFFTDSWRPDSWYDKIWENRKIGLHTLVLLDIKVKEQSIENMARGRLIYEPPRYMSIAQCCEQLLEIEETRGTEAYTPDTPCVAISRLGSASQTFKAGTIKELAEYDSGEPLHSLVILGRQTHELEIEYLLEFCDDREKFKQDVASDQEYFKPPAWVPPPEDED.

Residues leucine 9, aspartate 85, glycine 88, serine 113–valine 114, leucine 164, leucine 222, and histidine 247 each bind S-adenosyl-L-methionine.

It belongs to the diphthine synthase family.

The protein resides in the cytoplasm. It carries out the reaction 2-[(3S)-amino-3-carboxypropyl]-L-histidyl-[translation elongation factor 2] + 4 S-adenosyl-L-methionine = diphthine methyl ester-[translation elongation factor 2] + 4 S-adenosyl-L-homocysteine + 3 H(+). Its pathway is protein modification; peptidyl-diphthamide biosynthesis. In terms of biological role, S-adenosyl-L-methionine-dependent methyltransferase that catalyzes four methylations of the modified target histidine residue in translation elongation factor 2 (EF-2), to form an intermediate called diphthine methyl ester. The four successive methylation reactions represent the second step of diphthamide biosynthesis. This chain is Diphthine methyl ester synthase (DPH5), found in Kluyveromyces lactis (strain ATCC 8585 / CBS 2359 / DSM 70799 / NBRC 1267 / NRRL Y-1140 / WM37) (Yeast).